We begin with the raw amino-acid sequence, 174 residues long: Shikimate kinase 2 (174 aa).

12-17 (GCGKTT) serves as a coordination point for ATP. Mg(2+) contacts are provided by threonine 16 and aspartate 32. Substrate contacts are provided by aspartate 34, arginine 58, and glycine 79. The tract at residues 112–126 (EAFPEEGQRPTLTGK) is LID domain. Residue arginine 120 participates in ATP binding. Substrate is bound at residue arginine 139. Residue glutamine 155 coordinates ATP.

The protein belongs to the shikimate kinase family. AroL subfamily. As to quaternary structure, monomer. Mg(2+) serves as cofactor.

It is found in the cytoplasm. The enzyme catalyses shikimate + ATP = 3-phosphoshikimate + ADP + H(+). It participates in metabolic intermediate biosynthesis; chorismate biosynthesis; chorismate from D-erythrose 4-phosphate and phosphoenolpyruvate: step 5/7. Functionally, catalyzes the specific phosphorylation of the 3-hydroxyl group of shikimic acid using ATP as a cosubstrate. In Enterobacter sp. (strain 638), this protein is Shikimate kinase 2.